The chain runs to 132 residues: Large ribosomal subunit protein uL24 (132 aa).

It belongs to the universal ribosomal protein uL24 family. Part of the 50S ribosomal subunit.

One of two assembly initiator proteins, it binds directly to the 5'-end of the 23S rRNA, where it nucleates assembly of the 50S subunit. In terms of biological role, one of the proteins that surrounds the polypeptide exit tunnel on the outside of the subunit. This chain is Large ribosomal subunit protein uL24, found in Synechococcus sp. (strain JA-2-3B'a(2-13)) (Cyanobacteria bacterium Yellowstone B-Prime).